A 272-amino-acid chain; its full sequence is Alkaline ceramidase (272 aa).

2 consecutive transmembrane segments (helical) span residues 34-54 (FANT…IMLL) and 61-81 (VNGG…ASTY). Zn(2+) is bound at residue His-83. 4 helical membrane-spanning segments follow: residues 96–116 (LSLV…MKWF), 124–144 (LTVV…LCFL), 148–168 (LNAI…RYEG), and 183–203 (ILAL…LCDF). 2 residues coordinate Zn(2+): His-213 and His-217. Residues 214–234 (ALFHLLAGLAGYTIFIMFSMI) form a helical membrane-spanning segment. Asn-256 carries N-linked (GlcNAc...) asparagine glycosylation.

The protein belongs to the alkaline ceramidase family. Zn(2+) serves as cofactor.

The protein resides in the membrane. The enzyme catalyses an N-acylsphing-4-enine + H2O = sphing-4-enine + a fatty acid. Its function is as follows. Hydrolyzes the sphingolipid ceramide into sphingosine and free fatty acid. In Caenorhabditis briggsae, this protein is Alkaline ceramidase.